The chain runs to 217 residues: Small ribosomal subunit protein uS3 (217 aa).

A KH type-2 domain is found at 38-106; the sequence is IRKYIEQRLA…RVHINIIEIK (69 aa).

The protein belongs to the universal ribosomal protein uS3 family. As to quaternary structure, part of the 30S ribosomal subunit. Forms a tight complex with proteins S10 and S14.

Functionally, binds the lower part of the 30S subunit head. Binds mRNA in the 70S ribosome, positioning it for translation. This chain is Small ribosomal subunit protein uS3, found in Lactiplantibacillus plantarum (strain ATCC BAA-793 / NCIMB 8826 / WCFS1) (Lactobacillus plantarum).